Reading from the N-terminus, the 384-residue chain is N-acetyldiaminopimelate deacetylase (384 aa).

Residue Asp74 is part of the active site. The active-site Proton acceptor is Glu133.

It belongs to the peptidase M20A family. N-acetyldiaminopimelate deacetylase subfamily.

It carries out the reaction N-acetyl-(2S,6S)-2,6-diaminopimelate + H2O = (2S,6S)-2,6-diaminopimelate + acetate. Its pathway is amino-acid biosynthesis; L-lysine biosynthesis via DAP pathway; LL-2,6-diaminopimelate from (S)-tetrahydrodipicolinate (acetylase route): step 3/3. In terms of biological role, catalyzes the conversion of N-acetyl-diaminopimelate to diaminopimelate and acetate. This Pediococcus pentosaceus (strain ATCC 25745 / CCUG 21536 / LMG 10740 / 183-1w) protein is N-acetyldiaminopimelate deacetylase.